A 198-amino-acid polypeptide reads, in one-letter code: Armadillo repeat-containing protein 7 (198 aa).

ARM repeat units follow at residues 57–99 (QVLD…HAGG) and 100–140 (VPLI…TATP). Ser-169 is modified (phosphoserine).

As to quaternary structure, component of the minor spliceosome. Within this complex, interacts with RBM48.

Functionally, as a component of the minor spliceosome, involved in the splicing of U12-type introns in pre-mRNAs. This chain is Armadillo repeat-containing protein 7 (ARMC7), found in Homo sapiens (Human).